The chain runs to 232 residues: 7-cyano-7-deazaguanine synthase 1 (232 aa).

7–17 contacts ATP; that stretch reads CSGGLDSVSLA. The Zn(2+) site is built by C185, C193, C196, and C199.

The protein belongs to the QueC family. Requires Zn(2+) as cofactor.

The enzyme catalyses 7-carboxy-7-deazaguanine + NH4(+) + ATP = 7-cyano-7-deazaguanine + ADP + phosphate + H2O + H(+). The protein operates within purine metabolism; 7-cyano-7-deazaguanine biosynthesis. Catalyzes the ATP-dependent conversion of 7-carboxy-7-deazaguanine (CDG) to 7-cyano-7-deazaguanine (preQ(0)). In Mesorhizobium japonicum (strain LMG 29417 / CECT 9101 / MAFF 303099) (Mesorhizobium loti (strain MAFF 303099)), this protein is 7-cyano-7-deazaguanine synthase 1.